Here is a 758-residue protein sequence, read N- to C-terminus: 5-methyltetrahydropteroyltriglutamate--homocysteine methyltransferase (758 aa).

5-methyltetrahydropteroyltri-L-glutamate is bound by residues 17–20 (RELK) and Lys-113. Residues 433–435 (IGS) and Glu-486 contribute to the L-homocysteine site. L-methionine-binding positions include 433–435 (IGS) and Glu-486. Residues 517 to 518 (RC) and Trp-563 each bind 5-methyltetrahydropteroyltri-L-glutamate. L-homocysteine is bound at residue Asp-601. An L-methionine-binding site is contributed by Asp-601. Glu-607 is a 5-methyltetrahydropteroyltri-L-glutamate binding site. Zn(2+) contacts are provided by His-643, Cys-645, and Glu-667. Residue His-696 is the Proton donor of the active site. Zn(2+) is bound at residue Cys-728.

Belongs to the vitamin-B12 independent methionine synthase family. Requires Zn(2+) as cofactor.

The catalysed reaction is 5-methyltetrahydropteroyltri-L-glutamate + L-homocysteine = tetrahydropteroyltri-L-glutamate + L-methionine. Its pathway is amino-acid biosynthesis; L-methionine biosynthesis via de novo pathway; L-methionine from L-homocysteine (MetE route): step 1/1. In terms of biological role, catalyzes the transfer of a methyl group from 5-methyltetrahydrofolate to homocysteine resulting in methionine formation. This Nitrosomonas europaea (strain ATCC 19718 / CIP 103999 / KCTC 2705 / NBRC 14298) protein is 5-methyltetrahydropteroyltriglutamate--homocysteine methyltransferase.